The following is a 171-amino-acid chain: MEDLKSIIRNIPDFPKKGILFKDITTLLGDAKSFQRMVDLLSHRYVGQKIDKVVGVEARGFIIGAALAYKLGAGIVLVRKPGKLPSKTRSKTYDLEYGTDTLEIHTDAFNKGDRVLIADDLLATGGTMAAVVDLISSMDVELVECCFMAELEFLEGGKKLPEGKVFSLLKF.

This sequence belongs to the purine/pyrimidine phosphoribosyltransferase family. Homodimer.

The protein localises to the cytoplasm. The enzyme catalyses AMP + diphosphate = 5-phospho-alpha-D-ribose 1-diphosphate + adenine. Its pathway is purine metabolism; AMP biosynthesis via salvage pathway; AMP from adenine: step 1/1. Functionally, catalyzes a salvage reaction resulting in the formation of AMP, that is energically less costly than de novo synthesis. This chain is Adenine phosphoribosyltransferase, found in Citrifermentans bemidjiense (strain ATCC BAA-1014 / DSM 16622 / JCM 12645 / Bem) (Geobacter bemidjiensis).